A 933-amino-acid polypeptide reads, in one-letter code: Potassium voltage-gated channel subfamily KQT member 5 (933 aa).

Residues 1–126 are Cytoplasmic-facing; that stretch reads MPRHHAGGEE…YNVLERPRGW (126 aa). Ser89 carries the phosphoserine modification. A helical transmembrane segment spans residues 127–147; that stretch reads AFVYHAFVFLLVFGCLILSVF. Topologically, residues 148 to 157 are extracellular; that stretch reads STIPEHTKLA. A helical membrane pass occupies residues 158-178; the sequence is SSCLLILEFVMIVVFGLEFII. The Cytoplasmic portion of the chain corresponds to 179 to 201; the sequence is RIWSAGCCCRYRGWQGRLRFARK. A helical transmembrane segment spans residues 202-222; sequence PFCVIDTIVLIASIAVVSAKT. Residues 223–230 are Extracellular-facing; that stretch reads QGNIFATS. Residues 231–253 form a helical; Voltage-sensor membrane-spanning segment; that stretch reads ALRSLRFLQILRMVRMDRRGGTW. A 1,2-diacyl-sn-glycero-3-phospho-(1D-myo-inositol-4,5-bisphosphate) contacts are provided by Arg249 and Lys265. Residues 254 to 267 lie on the Cytoplasmic side of the membrane; the sequence is KLLGSVVYAHSKEL. The helical transmembrane segment at 268-288 threads the bilayer; that stretch reads ITAWYIGFLVLIFSSFLVYLV. Residues 289-299 are Extracellular-facing; sequence EKDANKEFSTY. The segment at residues 300–320 is an intramembrane region (pore-forming); that stretch reads ADALWWGTITLTTIGYGDKTP. Topologically, residues 321-326 are extracellular; the sequence is LTWLGR. A helical membrane pass occupies residues 327-347; the sequence is LLSAGFALLGISFFALPAGIL. The Cytoplasmic segment spans residues 348–933; that stretch reads GSGFALKVQE…ALSLPHVKLN (586 aa). Position 362 (Lys362) interacts with a 1,2-diacyl-sn-glycero-3-phospho-(1D-myo-inositol-4,5-bisphosphate). An interaction with CALM region spans residues 371–379; it reads AANLIQCVW. The interval 405–465 is disordered; the sequence is SPTKKEQGEA…EGSPTKVQKS (61 aa). Over residues 432–441 the composition is skewed to polar residues; that stretch reads RGQSIKSRQA. Ser448 is modified (phosphoserine). An interaction with CALM region spans residues 522–529; that stretch reads VIRAIRIM. The disordered stretch occupies residues 578–598; sequence KGQMTSDKKSREKITAEHETT. Over residues 583–598 the composition is skewed to basic and acidic residues; the sequence is SDKKSREKITAEHETT. Residue Ser832 is modified to Phosphoserine. A disordered region spans residues 878 to 933; the sequence is GAEETETDTFDGTPPPAGEAAFSSDSLRTGRSRSSQNICKTGDSTDALSLPHVKLN. The span at 900–924 shows a compositional bias: polar residues; sequence SSDSLRTGRSRSSQNICKTGDSTDA.

Belongs to the potassium channel family. KQT (TC 1.A.1.15) subfamily. Kv7.5/KCNQ5 sub-subfamily. In terms of assembly, homotetramer; forms a functional homotetrameric channel resulting in the expression of a small M-current. Heterotetramer with KCNQ3; forms heterotetrameric M-channel responsible for the native M-current. Heterotetramer with KCNQ1; forms a functional voltage-gated potassium channel. Interacts (via C-terminus) with calmodulin/CALM; forms a heterooctameric structure (with 4:4 KCNQ1:CALM stoichiometry); the interaction is calcium-independent, constitutive and participates in the channel function. Strongly expressed in brain. Also expressed in colon, lung and uterus.

The protein localises to the cell membrane. It catalyses the reaction K(+)(in) = K(+)(out). Its activity is regulated as follows. Phosphatidylinositol-4,5-bisphosphate (PIP2) is essential to activate KCNQ5 channel by inducing the coupling of the voltage-sensing domain (VSD) and the pore-forming domain (PD). Calcium suppresses KCNQ5 channel current through calcium-bound CALM C-terminus. Therefore CALM acts as calcium sensor that controls channel activity. Zinc potentiates channel activity in a pH-dependent manner. The activity is modulated by small changes in cell volume. Activated by the anticonvulsant retigabine. Inhibited by linopirdine and XE991. Its function is as follows. Pore-forming subunit of the voltage-gated potassium (Kv) channel broadly expressed in brain and skeletal muscle and involved in the regulation of neuronal excitability. Associates with KCNQ3/Kv7.3 pore-forming subunit to form a potassium channel which contributes to M-type current, a slowly activating and deactivating potassium conductance which plays a critical role in determining the subthreshold electrical excitability of neurons. Contributes, with other potassium channels, to the molecular diversity of a heterogeneous population of M-channels, varying in kinetic and pharmacological properties, which underlie this physiologically important current. Also forms a functional channel with KCNQ1/Kv7.1 subunit that may contribute to vasoconstriction and hypertension. Channel may be selectively permeable in vitro to other cations besides potassium, in decreasing order of affinity K(+) = Rb(+) &gt; Cs(+) &gt; Na(+). The sequence is that of Potassium voltage-gated channel subfamily KQT member 5 from Mus musculus (Mouse).